Consider the following 145-residue polypeptide: Large ribosomal subunit protein uL11 (145 aa).

It belongs to the universal ribosomal protein uL11 family. Part of the ribosomal stalk of the 50S ribosomal subunit. Interacts with L10 and the large rRNA to form the base of the stalk. L10 forms an elongated spine to which L12 dimers bind in a sequential fashion forming a multimeric L10(L12)X complex. One or more lysine residues are methylated.

In terms of biological role, forms part of the ribosomal stalk which helps the ribosome interact with GTP-bound translation factors. This is Large ribosomal subunit protein uL11 from Coxiella burnetii (strain CbuK_Q154) (Coxiella burnetii (strain Q154)).